Here is a 229-residue protein sequence, read N- to C-terminus: Casparian strip membrane protein 1 (229 aa).

Over 1 to 67 (MSTSEAGAAA…FRRADRGSRC (67 aa)) the chain is Cytoplasmic. Residues 68 to 88 (VALLDFVLRVAAFGPALAAAI) form a helical membrane-spanning segment. Residues 89 to 115 (ATGTSDETLSVFTQFFQFHARFDDFPA) lie on the Extracellular side of the membrane. A helical membrane pass occupies residues 116-136 (LLFFMVANAIAAGYLVLSLPF). Residues 137-157 (SAVIVLRPQAIGLRHLLLVCD) are Cytoplasmic-facing. Residues 158-178 (MIIAALLTAAAAAAAAIVDLA) form a helical membrane-spanning segment. At 179 to 205 (HSGNLRANWVPICMQFHGFCQRTSGAV) the chain is on the extracellular side. The helical transmembrane segment at 206–226 (VGSFLAVLVLLFLVILAAFAI) threads the bilayer. The Cytoplasmic portion of the chain corresponds to 227-229 (RKR).

The protein belongs to the Casparian strip membrane proteins (CASP) family. Homodimer and heterodimers.

The protein resides in the cell membrane. Regulates membrane-cell wall junctions and localized cell wall deposition. Required for establishment of the Casparian strip membrane domain (CSD) and the subsequent formation of Casparian strips, a cell wall modification of the root endodermis that determines an apoplastic barrier between the intraorganismal apoplasm and the extraorganismal apoplasm and prevents lateral diffusion. In Sorghum bicolor (Sorghum), this protein is Casparian strip membrane protein 1.